Reading from the N-terminus, the 310-residue chain is Homoserine kinase (310 aa).

ATP is bound at residue 91-101 (PIGSGLGSSAC).

Belongs to the GHMP kinase family. Homoserine kinase subfamily.

The protein resides in the cytoplasm. It catalyses the reaction L-homoserine + ATP = O-phospho-L-homoserine + ADP + H(+). The protein operates within amino-acid biosynthesis; L-threonine biosynthesis; L-threonine from L-aspartate: step 4/5. Functionally, catalyzes the ATP-dependent phosphorylation of L-homoserine to L-homoserine phosphate. The sequence is that of Homoserine kinase from Escherichia coli (strain K12 / MC4100 / BW2952).